Here is a 371-residue protein sequence, read N- to C-terminus: Cytochrome b (371 aa).

Helical transmembrane passes span 25 to 45 (FGSM…FLAV), 69 to 90 (WMMQ…YIHI), 105 to 125 (WMSG…GYVL), and 170 to 190 (FFAL…LHVI). Heme b is bound by residues His-75 and His-89. Positions 174 and 188 each coordinate heme b. His-193 serves as a coordination point for a ubiquinone. 4 helical membrane-spanning segments follow: residues 218–238 (YKDF…VSFF), 280–300 (LGGA…PFTH), 312–332 (LYQL…WAAT), and 339–358 (FITI…ISIP).

It belongs to the cytochrome b family. As to quaternary structure, the cytochrome bc1 complex contains 3 respiratory subunits (MT-CYB, CYC1 and UQCRFS1), 2 core proteins (UQCRC1 and UQCRC2) and probably 6 low-molecular weight proteins. Heme b serves as cofactor.

It localises to the mitochondrion inner membrane. Functionally, component of the ubiquinol-cytochrome c reductase complex (complex III or cytochrome b-c1 complex) that is part of the mitochondrial respiratory chain. The b-c1 complex mediates electron transfer from ubiquinol to cytochrome c. Contributes to the generation of a proton gradient across the mitochondrial membrane that is then used for ATP synthesis. This Malayopython reticulatus (Reticulate python) protein is Cytochrome b (MT-CYB).